We begin with the raw amino-acid sequence, 320 residues long: NAD-dependent protein deacylase SIR2rp2 (320 aa).

A mitochondrion-targeting transit peptide spans 1–22 (MRPAGTLASFLERCSARKRGRG). The Deacetylase sirtuin-type domain maps to 23–320 (CVVLTGAGCS…MFFRRKTIQL (298 aa)). Residues 28–48 (GAGCSTESGIPDYRGPNGQYH) and 108–111 (QNVD) each bind NAD(+). Histidine 144 serves as the catalytic Proton acceptor. The Zn(2+) site is built by cysteine 152, cysteine 155, cysteine 207, and cysteine 210. Residues 248–250 (GTS), 274–276 (NAG), and glycine 294 each bind NAD(+).

The protein belongs to the sirtuin family. Class II subfamily. It depends on Zn(2+) as a cofactor.

The protein localises to the mitochondrion matrix. The catalysed reaction is N(6)-acetyl-L-lysyl-[protein] + NAD(+) + H2O = 2''-O-acetyl-ADP-D-ribose + nicotinamide + L-lysyl-[protein]. In terms of biological role, NAD-dependent protein deacylase. Catalyzes the NAD-dependent hydrolysis of acyl groups from lysine residues. The protein is NAD-dependent protein deacylase SIR2rp2 (SIR2rp2) of Leishmania major.